The primary structure comprises 396 residues: Ribosomal RNA large subunit methyltransferase I (396 aa).

Residues 2-81 (SVRLVLAKGR…ESIDIAFFSR (80 aa)) enclose the PUA domain.

Belongs to the methyltransferase superfamily. RlmI family.

The protein resides in the cytoplasm. The catalysed reaction is cytidine(1962) in 23S rRNA + S-adenosyl-L-methionine = 5-methylcytidine(1962) in 23S rRNA + S-adenosyl-L-homocysteine + H(+). Specifically methylates the cytosine at position 1962 (m5C1962) of 23S rRNA. This is Ribosomal RNA large subunit methyltransferase I from Escherichia coli O157:H7.